The following is a 383-amino-acid chain: Galactokinase (383 aa).

34–37 (EHTD) provides a ligand contact to substrate. 124 to 130 (GAGLSSS) is an ATP binding site. Residues Ser-130 and Glu-162 each coordinate Mg(2+). The Proton acceptor role is filled by Asp-174. Residue Tyr-223 coordinates substrate.

It belongs to the GHMP kinase family. GalK subfamily.

The protein localises to the cytoplasm. It catalyses the reaction alpha-D-galactose + ATP = alpha-D-galactose 1-phosphate + ADP + H(+). The protein operates within carbohydrate metabolism; galactose metabolism. Functionally, catalyzes the transfer of the gamma-phosphate of ATP to D-galactose to form alpha-D-galactose-1-phosphate (Gal-1-P). The chain is Galactokinase from Yersinia pseudotuberculosis serotype O:1b (strain IP 31758).